A 1074-amino-acid polypeptide reads, in one-letter code: Chitin synthase 2 (1074 aa).

Disordered stretches follow at residues 1-32, 56-179, and 209-255; these read MSHY…AHSG, QAAP…PSQH, and RSDS…PYNN. A compositionally biased stretch (polar residues) spans 19-29; that stretch reads DQQQPYYTDQA. A compositionally biased stretch (low complexity) spans 68–80; that stretch reads RIRSNSSGSRSVS. Residues Asn72 and Asn97 are each glycosylated (N-linked (GlcNAc...) asparagine). Polar residues predominate over residues 85–119; that stretch reads AYTNQGIPPVPSNLSAARQRSDPSQALPPSSSSYA. A compositionally biased stretch (low complexity) spans 129–143; it reads SSHRNAPNAPNSNHP. An N-linked (GlcNAc...) asparagine glycan is attached at Asn149. Asn289 carries N-linked (GlcNAc...) asparagine glycosylation. A run of 8 helical transmembrane segments spans residues 608 to 628, 742 to 762, 779 to 799, 817 to 837, 867 to 887, 891 to 911, 1001 to 1021, and 1048 to 1068; these read VFGF…KALL, LVLL…FYFL, GAAI…VVLV, IIIF…TIYL, IVIS…LHLE, MLTS…ILSM, LVLI…STWW, and IFWS…TFLL.

The protein belongs to the chitin synthase family. Class II subfamily.

The protein localises to the cell membrane. The protein resides in the cytoplasmic vesicle membrane. The enzyme catalyses [(1-&gt;4)-N-acetyl-beta-D-glucosaminyl](n) + UDP-N-acetyl-alpha-D-glucosamine = [(1-&gt;4)-N-acetyl-beta-D-glucosaminyl](n+1) + UDP + H(+). Polymerizes chitin, a structural polymer of the cell wall and septum, by transferring the sugar moiety of UDP-GlcNAc to the non-reducing end of the growing chitin polymer. This chain is Chitin synthase 2 (CHS2), found in Mycosarcoma maydis (Corn smut fungus).